The chain runs to 1244 residues: Structural polyprotein (1244 aa).

The segment at 1 to 113 (MNSVFYNPFG…GKRQRTALKF (113 aa)) is disordered. The segment covering 35–44 (GLTTQIQQLT) has biased composition (polar residues). A host transcription inhibition region spans residues 35-69 (GLTTQIQQLTRAVRALVLDNATRRQRPAPRTRPRK). A compositionally biased stretch (basic residues) spans 57–81 (RRQRPAPRTRPRKPKTQKPKPKKQN). Positions 62 to 103 (APRTRPRKPKTQKPKPKKQNQKPPQQQKKGKNQPQQPKKPKP) match the Nuclear localization signal motif. The span at 82–97 (QKPPQQQKKGKNQPQQ) shows a compositional bias: low complexity. The binding to the viral RNA stretch occupies residues 85–118 (PQQQKKGKNQPQQPKKPKPGKRQRTALKFEADRT). Basic residues predominate over residues 99–109 (KKPKPGKRQRT). Residues 103–117 (PGKRQRTALKFEADR) are ribosome-binding. Residues 117-267 (RTFVGKNEDG…KTTHEDTVEW (151 aa)) form the Peptidase S3 domain. The Charge relay system role is filled by H144. A Nuclear export signal motif is present at residues 149 to 159 (IDHPALAKLKF). The segment at 160 to 165 (TKSSSY) is interaction with spike glycoprotein E2. The Charge relay system role is filled by D166. The tract at residues 188-198 (PEVFYNWHHGA) is dimerization of the capsid protein. Catalysis depends on S218, which acts as the Charge relay system. Positions 224-228 (DNSGK) are dimerization of the capsid protein. Residues 252 to 256 (KKGAA) are interaction with spike glycoprotein E2. The tract at residues 268 to 280 (SRAITAMCILQNV) is functions as an uncleaved signal peptide for the precursor of protein E3/E2. The Extracellular segment spans residues 268–696 (SRAITAMCIL…HYYHLYPFYT (429 aa)). N-linked (GlcNAc...) asparagine; by host glycosylation is present at N279. 4 disulfide bridges follow: C284–C290, C481–C595, C530–C555, and C532–C549. N525 carries an N-linked (GlcNAc...) asparagine; by host glycan. N-linked (GlcNAc...) asparagine; by host glycosylation occurs at N647. The chain crosses the membrane as a helical span at residues 697 to 717 (VTVLSGMGLAICAGLVISILC). Topologically, residues 718 to 751 (CCKARRDCLTPYQLAPNATVPFLVTLCCCFQRTS) are cytoplasmic. An interaction with the capsid protein region spans residues 720–724 (KARRD). S-palmitoyl cysteine; by host attachment occurs at residues C725, C745, and C746. An intrachain disulfide couples C725 to C746. Over 752–764 (ADEFTDTMGYLWQ) the chain is Extracellular. Transmembrane regions (helical) follow at residues 765–785 (HSQT…ITLV) and 786–805 (RCCS…NKAD). At 806–1218 (AYEHTITVPN…KTSWNWITAL (413 aa)) the chain is on the extracellular side. Disulfide bonds link C855/C920, C868/C900, C869/C902, and C874/C884. An E1 fusion peptide loop region spans residues 890–907 (VYPFLWGGAQCFCDSENS). Residues N945 and N1051 are each glycosylated (N-linked (GlcNAc...) asparagine; by host). Intrachain disulfides connect C1065/C1077, C1106/C1181, C1111/C1185, and C1133/C1175. Residues 1219-1239 (MGGISSIAAIAAIVLVIALVF) form a helical membrane-spanning segment. Residues 1240–1244 (TAQHR) lie on the Cytoplasmic side of the membrane.

In terms of assembly, homodimer. Homomultimer. Interacts with host karyopherin KPNA4; this interaction allows the nuclear import of the viral capsid protein. Interacts with spike glycoprotein E2. Interacts with host IRAK1; the interaction leads to inhibition of IRAK1-dependent signaling. The precursor of protein E3/E2 and E1 form a heterodimer shortly after synthesis. As to quaternary structure, the precursor of protein E3/E2 and E1 form a heterodimer shortly after synthesis. Processing of the precursor of protein E3/E2 into E2 and E3 results in a heterodimer of the spike glycoproteins E2 and E1. Spike at virion surface are constituted of a trimer of E2-E1 heterodimers. After target cell attachment and endocytosis, E1 change conformation to form homotrimers. Interacts with 6K protein. In terms of assembly, interacts with spike glycoprotein E1. Processing of the precursor of protein E3/E2 into E2 and E3 results in a heterodimer of the spike glycoproteins E2 and E1. Spike at virion surface are constituted of a trimer of E2-E1 heterodimers. Interacts with 6K protein. Oligomer. Interacts with spike glycoprotein E1. Interacts with spike glycoprotein E2. In terms of processing, structural polyprotein: Specific enzymatic cleavages in vivo yield mature proteins. Capsid protein is auto-cleaved during polyprotein translation, unmasking a signal peptide at the N-terminus of the precursor of E3/E2. The remaining polyprotein is then targeted to the host endoplasmic reticulum, where host signal peptidase cleaves it into pE2, 6K and E1 proteins. pE2 is further processed to mature E3 and E2 by host furin in trans-Golgi vesicle. Post-translationally, palmitoylated via thioester bonds. These palmitoylations may induce disruption of the C-terminus transmembrane. This would result in the reorientation of E2 C-terminus from lumenal to cytoplasmic side. N-glycosylated. In terms of processing, palmitoylated via thioester bonds.

It is found in the virion. It localises to the host cytoplasm. Its subcellular location is the host cell membrane. The protein localises to the host nucleus. The protein resides in the virion membrane. It is found in the host Golgi apparatus. It localises to the host trans-Golgi network. Its subcellular location is the host endoplasmic reticulum. The catalysed reaction is Autocatalytic release of the core protein from the N-terminus of the togavirus structural polyprotein by hydrolysis of a -Trp-|-Ser- bond.. In terms of biological role, forms an icosahedral capsid with a T=4 symmetry composed of 240 copies of the capsid protein surrounded by a lipid membrane through which penetrate 80 spikes composed of trimers of E1-E2 heterodimers. The capsid protein binds to the viral RNA genome at a site adjacent to a ribosome binding site for viral genome translation following genome release. Possesses a protease activity that results in its autocatalytic cleavage from the nascent structural protein. Following its self-cleavage, the capsid protein transiently associates with ribosomes, and within several minutes the protein binds to viral RNA and rapidly assembles into icosahedric core particles. The resulting nucleocapsid eventually associates with the cytoplasmic domain of the spike glycoprotein E2 at the cell membrane, leading to budding and formation of mature virions. In case of infection, new virions attach to target cells and after clathrin-mediated endocytosis their membrane fuses with the host endosomal membrane. This leads to the release of the nucleocapsid into the cytoplasm, followed by an uncoating event necessary for the genomic RNA to become accessible. The uncoating might be triggered by the interaction of capsid proteins with ribosomes. Binding of ribosomes would release the genomic RNA since the same region is genomic RNA-binding and ribosome-binding. Specifically inhibits interleukin-1 receptor-associated kinase 1/IRAK1-dependent signaling during viral entry, representing a means by which the alphaviruses may evade innate immune detection and activation prior to viral gene expression. Provides the signal sequence for the translocation of the precursor of protein E3/E2 to the host endoplasmic reticulum. Furin-cleaved E3 remains associated with spike glycoprotein E1 and mediates pH protection of the latter during the transport via the secretory pathway. After virion release from the host cell, the assembly protein E3 is gradually released in the extracellular space. Its function is as follows. Plays a role in viral attachment to target host cell, by binding to the cell receptor. Synthesized as a p62 precursor which is processed by furin at the cell membrane just before virion budding, giving rise to E2-E1 heterodimer. The p62-E1 heterodimer is stable, whereas E2-E1 is unstable and dissociate at low pH. p62 is processed at the last step, presumably to avoid E1 fusion activation before its final export to cell surface. E2 C-terminus contains a transitory transmembrane that would be disrupted by palmitoylation, resulting in reorientation of the C-terminal tail from lumenal to cytoplasmic side. This step is critical since E2 C-terminus is involved in budding by interacting with capsid proteins. This release of E2 C-terminus in cytoplasm occurs lately in protein export, and precludes premature assembly of particles at the endoplasmic reticulum membrane. Functionally, acts as a viroporin that participates in virus glycoprotein processing and transport to the plasma membrane, cell permeabilization and budding of viral particles. Disrupts the calcium homeostasis of the cell, probably at the endoplasmic reticulum level. This leads to cytoplasmic calcium elevation. Because of its lipophilic properties, the 6K protein is postulated to influence the selection of lipids that interact with the transmembrane domains of the glycoproteins, which, in turn, affects the deformability of the bilayer required for the extreme curvature that occurs as budding proceeds. Present in low amount in virions, about 3% compared to viral glycoproteins. In terms of biological role, class II viral fusion protein. Fusion activity is inactive as long as E1 is bound to E2 in mature virion. After virus attachment to target cell and endocytosis, acidification of the endosome induce dissociation of E1/E2 heterodimer and concomitant trimerization of the E1 subunits. This E1 trimer is fusion active, and promotes release of viral nucleocapsid in cytoplasm after endosome and viral membrane fusion. Efficient fusion requires the presence of cholesterol and sphingolipid in the target membrane. The polypeptide is Structural polyprotein (Aedes (AURAV)).